Consider the following 237-residue polypeptide: Peptidase E (237 aa).

Catalysis depends on charge relay system residues S122, D137, and H159.

The protein belongs to the peptidase S51 family.

The protein localises to the cytoplasm. The catalysed reaction is Dipeptidase E catalyzes the hydrolysis of dipeptides Asp-|-Xaa. It does not act on peptides with N-terminal Glu, Asn or Gln, nor does it cleave isoaspartyl peptides.. In terms of biological role, hydrolyzes dipeptides containing N-terminal aspartate residues. May play a role in allowing the cell to use peptide aspartate to spare carbon otherwise required for the synthesis of the aspartate family of amino acids. The sequence is that of Peptidase E from Shewanella baltica (strain OS185).